A 303-amino-acid chain; its full sequence is Proline dehydrogenase 2 (303 aa).

Residue K96 participates in substrate binding. D130 is an active-site residue. Residues M131 and Q159 each coordinate FAD. The active site involves R180. Residues 183–185 and 222–223 contribute to the FAD site; these read KGA and TH. Residue 284–285 coordinates substrate; sequence RR.

The protein belongs to the proline dehydrogenase family. FAD serves as cofactor.

It catalyses the reaction L-proline + a quinone = (S)-1-pyrroline-5-carboxylate + a quinol + H(+). It participates in amino-acid degradation; L-proline degradation into L-glutamate; L-glutamate from L-proline: step 1/2. In terms of biological role, converts proline to delta-1-pyrroline-5-carboxylate. Important for the use of proline as a sole carbon and energy source or a sole nitrogen source. The protein is Proline dehydrogenase 2 of Bacillus subtilis (strain 168).